Consider the following 267-residue polypeptide: Putative hydro-lyase Arth_3576 (267 aa).

This sequence belongs to the D-glutamate cyclase family.

The sequence is that of Putative hydro-lyase Arth_3576 from Arthrobacter sp. (strain FB24).